A 665-amino-acid polypeptide reads, in one-letter code: LisH domain-containing protein ARMC9 (665 aa).

A LisH domain is found at 7 to 39; the sequence is HESELLGLVKEYLDFAEFEDTLKTFSKECKIKG. A coiled-coil region spans residues 201–235; the sequence is ENGQSNKEMLQQLHQQLVEAERRSMTYLKRYNKIQ. Ser-582 carries the post-translational modification Phosphoserine. Positions 642–665 are disordered; the sequence is VQWSGDEPLQRPVTPGGHRNGYPV.

In terms of assembly, interacts with TOGARAM1, CCDC66, CEP104, CSPP1 and CEP290. Interacts with NDUFAF2.

The protein localises to the cytoplasm. It localises to the cytoskeleton. The protein resides in the cilium basal body. Its subcellular location is the cell projection. It is found in the cilium. The protein localises to the microtubule organizing center. It localises to the centrosome. The protein resides in the centriole. Its function is as follows. Involved in ciliogenesis. It is required for appropriate acetylation and polyglutamylation of ciliary microtubules, and regulation of cilium length. Acts as a positive regulator of hedgehog (Hh)signaling. May participate in the trafficking and/or retention of GLI2 and GLI3 proteins at the ciliary tip. This is LisH domain-containing protein ARMC9 (ARMC9) from Pongo abelii (Sumatran orangutan).